A 33-amino-acid polypeptide reads, in one-letter code: Cytochrome b6-f complex subunit 6 (33 aa).

The chain crosses the membrane as a helical span at residues Ile4–Phe24.

This sequence belongs to the PetL family. The 4 large subunits of the cytochrome b6-f complex are cytochrome b6, subunit IV (17 kDa polypeptide, PetD), cytochrome f and the Rieske protein, while the 4 small subunits are PetG, PetL, PetM and PetN. The complex functions as a dimer.

It localises to the plastid. The protein resides in the chloroplast thylakoid membrane. In terms of biological role, component of the cytochrome b6-f complex, which mediates electron transfer between photosystem II (PSII) and photosystem I (PSI), cyclic electron flow around PSI, and state transitions. PetL is important for photoautotrophic growth as well as for electron transfer efficiency and stability of the cytochrome b6-f complex. The sequence is that of Cytochrome b6-f complex subunit 6 from Pinus thunbergii (Japanese black pine).